A 50-amino-acid polypeptide reads, in one-letter code: Cytochrome c oxidase subunit 4 (50 aa).

Topologically, residues 2–17 (ASHHEITDHKHGEMDI) are cytoplasmic. A helical membrane pass occupies residues 18-49 (RHQQATFAGFIKGATWVSILSIAVLVFLALAN). S50 is a topological domain (periplasmic).

Its subcellular location is the cell inner membrane. The enzyme catalyses 4 Fe(II)-[cytochrome c] + O2 + 8 H(+)(in) = 4 Fe(III)-[cytochrome c] + 2 H2O + 4 H(+)(out). In terms of biological role, not required for enzymatic activity or proton pumping of the cytochrome c oxidase complex. In Paracoccus denitrificans, this protein is Cytochrome c oxidase subunit 4 (ctaH).